A 240-amino-acid chain; its full sequence is Ribonuclease HII (240 aa).

Residues 33–222 enclose the RNase H type-2 domain; the sequence is GPVAGVDEVG…VRRIVTRSNT (190 aa). Positions 39, 40, and 131 each coordinate a divalent metal cation.

This sequence belongs to the RNase HII family. Mn(2+) serves as cofactor. It depends on Mg(2+) as a cofactor.

The protein resides in the cytoplasm. It carries out the reaction Endonucleolytic cleavage to 5'-phosphomonoester.. Endonuclease that specifically degrades the RNA of RNA-DNA hybrids. The polypeptide is Ribonuclease HII (Mycobacterium leprae (strain Br4923)).